Reading from the N-terminus, the 164-residue chain is Ribosome maturation factor RimM (164 aa).

Positions 90–161 (KGSYFIADLI…TVTIKPLEIW (72 aa)) constitute a PRC barrel domain.

The protein belongs to the RimM family. Binds ribosomal protein uS19.

Its subcellular location is the cytoplasm. An accessory protein needed during the final step in the assembly of 30S ribosomal subunit, possibly for assembly of the head region. Essential for efficient processing of 16S rRNA. May be needed both before and after RbfA during the maturation of 16S rRNA. It has affinity for free ribosomal 30S subunits but not for 70S ribosomes. The chain is Ribosome maturation factor RimM from Clostridium botulinum (strain Hall / ATCC 3502 / NCTC 13319 / Type A).